Here is a 62-residue protein sequence, read N- to C-terminus: Large ribosomal subunit protein bL28 (62 aa).

The protein belongs to the bacterial ribosomal protein bL28 family.

The polypeptide is Large ribosomal subunit protein bL28 (Bacillus velezensis (strain DSM 23117 / BGSC 10A6 / LMG 26770 / FZB42) (Bacillus amyloliquefaciens subsp. plantarum)).